The following is a 466-amino-acid chain: A-type ATP synthase subunit B 2 (466 aa).

Belongs to the ATPase alpha/beta chains family. In terms of assembly, has multiple subunits with at least A(3), B(3), C, D, E, F, H, I and proteolipid K(x).

Its subcellular location is the cell membrane. Its function is as follows. Component of the A-type ATP synthase that produces ATP from ADP in the presence of a proton gradient across the membrane. The B chain is a regulatory subunit. This is A-type ATP synthase subunit B 2 from Methanospirillum hungatei JF-1 (strain ATCC 27890 / DSM 864 / NBRC 100397 / JF-1).